The following is a 326-amino-acid chain: Protein-arginine N-acetylglucosaminyltransferase NleB2 (326 aa).

Residues 45–47 (QWF), tyrosine 69, and 216–219 (YLDM) contribute to the UDP-N-acetyl-alpha-D-glucosamine site. The short motif at 218-220 (DMD) is the DXD motif element. Aspartate 220 serves as a coordination point for Mn(2+). Glutamate 250 serves as the catalytic Proton acceptor. Mn(2+) contacts are provided by asparagine 317 and serine 319. UDP-N-acetyl-alpha-D-glucosamine contacts are provided by residues serine 319 and 324–326 (SSW).

This sequence belongs to the glycosyltransferase NleB family. It depends on Mn(2+) as a cofactor.

It is found in the secreted. The protein resides in the host cell. It carries out the reaction L-arginyl-[protein] + UDP-N-acetyl-alpha-D-glucosamine = N(omega)-(N-acetyl-beta-D-glucosaminyl)-L-arginyl-[protein] + UDP + H(+). Its function is as follows. Protein-arginine N-acetylglucosaminyltransferase effector that catalyzes the transfer of a single N-acetylglucosamine (GlcNAc) to a conserved arginine residue of host target proteins. In contrast to NleB1, not able to disrupt TNF signaling in infected cells. Shows a lower enzymatic activity than NleB1. The polypeptide is Protein-arginine N-acetylglucosaminyltransferase NleB2 (Escherichia coli O145:H28 (strain RM12581)).